The following is a 637-amino-acid chain: Chaperone protein HtpG (637 aa).

The a; substrate-binding stretch occupies residues 1 to 345 (MSQQETHGFQ…SNDLPLNVSR (345 aa)). The b stretch occupies residues 346–562 (EILQDNHITK…EGEMSSQMIK (217 aa)). The tract at residues 563–637 (LMQAAGQPVP…MNQMLLANLK (75 aa)) is c.

The protein belongs to the heat shock protein 90 family. Homodimer.

The protein localises to the cytoplasm. In terms of biological role, molecular chaperone. Has ATPase activity. This Shewanella sp. (strain ANA-3) protein is Chaperone protein HtpG.